The primary structure comprises 185 residues: Large ribosomal subunit protein uL22 (185 aa).

The protein belongs to the universal ribosomal protein uL22 family. Part of the 50S ribosomal subunit.

In terms of biological role, this protein binds specifically to 23S rRNA. It makes multiple contacts with different domains of the 23S rRNA in the assembled 50S subunit and ribosome. The globular domain of the protein is located near the polypeptide exit tunnel on the outside of the subunit, while an extended beta-hairpin is found that lines the wall of the exit tunnel in the center of the 70S ribosome. This chain is Large ribosomal subunit protein uL22, found in Caldivirga maquilingensis (strain ATCC 700844 / DSM 13496 / JCM 10307 / IC-167).